A 179-amino-acid polypeptide reads, in one-letter code: Large ribosomal subunit protein uL6 (179 aa).

It belongs to the universal ribosomal protein uL6 family. Part of the 50S ribosomal subunit.

Functionally, this protein binds to the 23S rRNA, and is important in its secondary structure. It is located near the subunit interface in the base of the L7/L12 stalk, and near the tRNA binding site of the peptidyltransferase center. The polypeptide is Large ribosomal subunit protein uL6 (Mycolicibacterium vanbaalenii (strain DSM 7251 / JCM 13017 / BCRC 16820 / KCTC 9966 / NRRL B-24157 / PYR-1) (Mycobacterium vanbaalenii)).